The following is an 83-amino-acid chain: Large ribosomal subunit protein bL27 (83 aa).

Residues 1–25 form a disordered region; sequence MAHKKGQGASRNGRDSESKRLGLKV.

The protein belongs to the bacterial ribosomal protein bL27 family.

This chain is Large ribosomal subunit protein bL27, found in Chlamydia trachomatis serovar L2 (strain ATCC VR-902B / DSM 19102 / 434/Bu).